Here is a 379-residue protein sequence, read N- to C-terminus: Arginine biosynthesis bifunctional protein ArgJ (379 aa).

The substrate site is built by Thr140, Lys160, Thr171, Glu249, Asn374, and Thr379. The active-site Nucleophile is the Thr171.

It belongs to the ArgJ family. In terms of assembly, heterotetramer of two alpha and two beta chains.

The protein localises to the cytoplasm. The enzyme catalyses N(2)-acetyl-L-ornithine + L-glutamate = N-acetyl-L-glutamate + L-ornithine. It carries out the reaction L-glutamate + acetyl-CoA = N-acetyl-L-glutamate + CoA + H(+). It functions in the pathway amino-acid biosynthesis; L-arginine biosynthesis; L-ornithine and N-acetyl-L-glutamate from L-glutamate and N(2)-acetyl-L-ornithine (cyclic): step 1/1. Its pathway is amino-acid biosynthesis; L-arginine biosynthesis; N(2)-acetyl-L-ornithine from L-glutamate: step 1/4. Its function is as follows. Catalyzes two activities which are involved in the cyclic version of arginine biosynthesis: the synthesis of N-acetylglutamate from glutamate and acetyl-CoA as the acetyl donor, and of ornithine by transacetylation between N(2)-acetylornithine and glutamate. This chain is Arginine biosynthesis bifunctional protein ArgJ, found in Archaeoglobus fulgidus (strain ATCC 49558 / DSM 4304 / JCM 9628 / NBRC 100126 / VC-16).